The sequence spans 469 residues: Actin-related protein 4 (469 aa).

The interval 104–136 (PERSTPPSKKGINISDDGDVPMEDDGNNNEDAT) is disordered. Residues 119–136 (DDGDVPMEDDGNNNEDAT) show a composition bias toward acidic residues.

The protein belongs to the actin family. ARP4 subfamily. Component of the NuA4 histone acetyltransferase complex, of the INO80 chromatin remodeling complex, and of the SWR1 chromatin remodeling complex.

It is found in the nucleus. Functionally, chromatin interaction component of the NuA4 histone acetyltransferase complex which is involved in transcriptional activation of selected genes principally by acetylation of nucleosomal histone H4 and H2A. The NuA4 complex is also involved in DNA repair. Is required for NuA4 complex integrity. Component of the SWR1 complex which mediates the ATP-dependent exchange of histone H2A for the H2A variant H2A.Z leading to transcriptional regulation of selected genes by chromatin remodeling. Component of the INO80 complex which remodels chromatin by shifting nucleosomes and is involved in DNA repair. This Neurospora crassa (strain ATCC 24698 / 74-OR23-1A / CBS 708.71 / DSM 1257 / FGSC 987) protein is Actin-related protein 4 (arp-4).